Here is a 102-residue protein sequence, read N- to C-terminus: UPF0122 protein MPN_424 (102 aa).

This sequence belongs to the UPF0122 family.

In terms of biological role, might take part in the signal recognition particle (SRP) pathway. This is inferred from the conservation of its genetic proximity to ftsY/ffh. May be a regulatory protein. The chain is UPF0122 protein MPN_424 from Mycoplasma pneumoniae (strain ATCC 29342 / M129 / Subtype 1) (Mycoplasmoides pneumoniae).